Consider the following 74-residue polypeptide: Somatostatin-2 (74 aa).

The propeptide occupies 1–46 (ARGAGLLSQDWSAVEDLLAQMSLPEADAQREAEVVSVATGGRLNLE). Cys63 and Cys74 are oxidised to a cystine.

Belongs to the somatostatin family.

It localises to the secreted. Somatostatin inhibits the release of somatotropin. The sequence is that of Somatostatin-2 (sst2) from Myoxocephalus scorpius (Shorthorn sculpin).